The primary structure comprises 228 residues: HTH-type transcriptional repressor RspR (228 aa).

One can recognise an HTH gntR-type domain in the interval 11–78 (QPVNQQIYRI…PQRGSYVNKI (68 aa)). Positions 38–57 (EKEVSVRFNVSRQPVREAFI) form a DNA-binding region, H-T-H motif.

In terms of biological role, repressor of the rspAB operon. Acts by binding directly to the upstream region of rspA. The chain is HTH-type transcriptional repressor RspR (rspR) from Escherichia coli (strain K12).